We begin with the raw amino-acid sequence, 198 residues long: Carnitine operon protein CaiE (198 aa).

A disordered region spans residues 179 to 198 (VEENRPRLKGTTDVKPKSAQ). Positions 180–198 (EENRPRLKGTTDVKPKSAQ) are enriched in basic and acidic residues.

The protein belongs to the transferase hexapeptide repeat family.

It functions in the pathway amine and polyamine metabolism; carnitine metabolism. Its function is as follows. Overproduction of CaiE stimulates the activity of CaiB and CaiD. In Salmonella typhi, this protein is Carnitine operon protein CaiE.